A 482-amino-acid chain; its full sequence is Malvidin galactosylase UGT88C3 (482 aa).

His16 acts as the Proton acceptor in catalysis. Catalysis depends on Asp117, which acts as the Charge relay. UDP contacts are provided by Ser279, Trp345, Ala349, His366, Asn370, Ser371, and Glu374.

It belongs to the UDP-glycosyltransferase family.

Its subcellular location is the endoplasmic reticulum. It is found in the nucleus. It catalyses the reaction malvidin + UDP-alpha-D-galactose = malvidin 3-O-beta-D-galactoside + UDP + H(+). Its pathway is pigment biosynthesis; anthocyanin biosynthesis. In terms of biological role, UDP-glycosyltransferase which uses UDP-galactose and malvidin as substrates to catalyze the biosynthesis of malvidin 3-O-galactoside, an anthocyanin conferring purple pigmentation. The protein is Malvidin galactosylase UGT88C3 of Oryza sativa subsp. indica (Rice).